Here is a 211-residue protein sequence, read N- to C-terminus: Peptidyl-tRNA hydrolase (211 aa).

TRNA is bound at residue Tyr17. The Proton acceptor role is filled by His22. TRNA-binding residues include Phe79, Asn81, and Asn127.

This sequence belongs to the PTH family. Monomer.

Its subcellular location is the cytoplasm. It carries out the reaction an N-acyl-L-alpha-aminoacyl-tRNA + H2O = an N-acyl-L-amino acid + a tRNA + H(+). In terms of biological role, hydrolyzes ribosome-free peptidyl-tRNAs (with 1 or more amino acids incorporated), which drop off the ribosome during protein synthesis, or as a result of ribosome stalling. Functionally, catalyzes the release of premature peptidyl moieties from peptidyl-tRNA molecules trapped in stalled 50S ribosomal subunits, and thus maintains levels of free tRNAs and 50S ribosomes. The sequence is that of Peptidyl-tRNA hydrolase from Solidesulfovibrio magneticus (strain ATCC 700980 / DSM 13731 / RS-1) (Desulfovibrio magneticus).